We begin with the raw amino-acid sequence, 67 residues long: Non-specific lipid-transfer protein 2P (67 aa).

Cystine bridges form between Cys2/Cys34, Cys10/Cys24, Cys25/Cys60, and Cys36/Cys67.

Transfer lipids across membranes. May play a role in plant defense or in the biosynthesis of cuticle layers. The chain is Non-specific lipid-transfer protein 2P from Triticum aestivum (Wheat).